Here is a 178-residue protein sequence, read N- to C-terminus: Large ribosomal subunit protein uL6 (178 aa).

It belongs to the universal ribosomal protein uL6 family. As to quaternary structure, part of the 50S ribosomal subunit.

Functionally, this protein binds to the 23S rRNA, and is important in its secondary structure. It is located near the subunit interface in the base of the L7/L12 stalk, and near the tRNA binding site of the peptidyltransferase center. This is Large ribosomal subunit protein uL6 from Limosilactobacillus reuteri (strain DSM 20016) (Lactobacillus reuteri).